We begin with the raw amino-acid sequence, 1270 residues long: Breakpoint cluster region protein (1270 aa).

Residues 28-55 adopt a coiled-coil conformation; sequence VGDIEQELERCKASIRRLEQEVNQERFR. 4 disordered regions span residues 67-173, 201-249, 295-396, and 412-484; these read KKSY…SADA, ISSL…DYED, KSPL…RHRQ, and TGQI…LEPT. The segment covering 126 to 139 has biased composition (low complexity); sequence GRPATARRPAAAAP. A phosphoserine mark is found at Ser-216 and Ser-237. At Tyr-247 the chain carries Phosphotyrosine. Composition is skewed to low complexity over residues 348-358 and 371-384; these read SSGQSSRVSPS and SPSQNSQQSFDSSS. Phosphoserine occurs at positions 358, 379, and 384. Phosphothreonine is present on Thr-387. A phosphoserine mark is found at Ser-461 and Ser-465. Arg-473 carries the omega-N-methylarginine modification. Residues Ser-475 and Ser-487 each carry the phosphoserine modification. Residues 497–690 form the DH domain; it reads MRKWVLSGIL…QNFLSSINEE (194 aa). The residue at position 553 (Tyr-553) is a Phosphotyrosine. Phosphothreonine is present on Thr-640. A Phosphotyrosine modification is found at Tyr-643. Phosphothreonine is present on Thr-692. Positions 707 to 865 constitute a PH domain; that stretch reads QLLKDSFMVE…WRESIREQQK (159 aa). The 128-residue stretch at 892–1019 folds into the C2 domain; sequence HHIPLTINKE…QDRDWQRTVI (128 aa). The Rho-GAP domain occupies 1053–1247; it reads VKIAVVTKRE…VMSQVQVLLY (195 aa). Residue Ser-1263 is modified to Phosphoserine.

In terms of assembly, homotetramer. Interacts with PDZK1. May interact with CCPG1. Interacts with HCK, FES/FPS, ABL1, PIK3R1 and GRB2. Interacts with SH2D5. Interacts with DLG4. Autophosphorylated. Phosphorylated by FES/FPS on tyrosine residues, leading to down-regulation of the BCR kinase activity. Phosphorylation by HCK is important for interaction with GRB2. As to expression, expressed in brain, including the cortex, hippocampus, cerebellum, and brainstem, as well as the spinal cord (at protein level).

The protein localises to the postsynaptic density. It localises to the cell projection. The protein resides in the dendritic spine. It is found in the axon. Its subcellular location is the synapse. The enzyme catalyses L-seryl-[protein] + ATP = O-phospho-L-seryl-[protein] + ADP + H(+). It carries out the reaction L-threonyl-[protein] + ATP = O-phospho-L-threonyl-[protein] + ADP + H(+). Its function is as follows. Protein with a unique structure having two opposing regulatory activities toward small GTP-binding proteins. The C-terminus is a GTPase-activating protein (GAP) domain which stimulates GTP hydrolysis by RAC1, RAC2 and CDC42. Accelerates the intrinsic rate of GTP hydrolysis of RAC1 or CDC42, leading to down-regulation of the active GTP-bound form. The central Dbl homology (DH) domain functions as guanine nucleotide exchange factor (GEF) that modulates the GTPases CDC42, RHOA and RAC1. Promotes the conversion of CDC42, RHOA and RAC1 from the GDP-bound to the GTP-bound form. The amino terminus contains an intrinsic kinase activity. Functions as an important negative regulator of neuronal RAC1 activity. Regulates macrophage functions such as CSF1-directed motility and phagocytosis through the modulation of RAC1 activity. Plays a major role as a RHOA GEF in keratinocytes being involved in focal adhesion formation and keratinocyte differentiation. This Rattus norvegicus (Rat) protein is Breakpoint cluster region protein.